The following is a 215-amino-acid chain: Pyrrolidone-carboxylate peptidase (215 aa).

Active-site residues include E78, C141, and H165.

This sequence belongs to the peptidase C15 family. As to quaternary structure, homotetramer.

The protein resides in the cytoplasm. It carries out the reaction Release of an N-terminal pyroglutamyl group from a polypeptide, the second amino acid generally not being Pro.. Removes 5-oxoproline from various penultimate amino acid residues except L-proline. The chain is Pyrrolidone-carboxylate peptidase from Streptococcus pyogenes serotype M12 (strain MGAS2096).